The following is an 86-amino-acid chain: MASKKAGGSTKNGRDSQSKRLGVKRFGGEKVLPGTIIVRQRGTKFHLGNNVKMGRDYTIYSVVEGLVKFERFSKERFKVSVYPKAV.

Residues 1–26 (MASKKAGGSTKNGRDSQSKRLGVKRF) are disordered.

This sequence belongs to the bacterial ribosomal protein bL27 family.

This is Large ribosomal subunit protein bL27 from Bdellovibrio bacteriovorus (strain ATCC 15356 / DSM 50701 / NCIMB 9529 / HD100).